Reading from the N-terminus, the 96-residue chain is Co-chaperonin GroES (96 aa).

It belongs to the GroES chaperonin family. As to quaternary structure, heptamer of 7 subunits arranged in a ring. Interacts with the chaperonin GroEL.

The protein resides in the cytoplasm. In terms of biological role, together with the chaperonin GroEL, plays an essential role in assisting protein folding. The GroEL-GroES system forms a nano-cage that allows encapsulation of the non-native substrate proteins and provides a physical environment optimized to promote and accelerate protein folding. GroES binds to the apical surface of the GroEL ring, thereby capping the opening of the GroEL channel. This Legionella jeonii protein is Co-chaperonin GroES.